Here is an 87-residue protein sequence, read N- to C-terminus: UPF0335 protein RHECIAT_CH0003797 (87 aa).

It belongs to the UPF0335 family.

This Rhizobium etli (strain CIAT 652) protein is UPF0335 protein RHECIAT_CH0003797.